A 494-amino-acid polypeptide reads, in one-letter code: Cytochrome P450 monooxygenase ccsD (494 aa).

A helical membrane pass occupies residues 5-25 (ISPRTLVLLAVTCSLLVLYFS). Residue C438 coordinates heme. 2 N-linked (GlcNAc...) asparagine glycosylation sites follow: N445 and N477.

It belongs to the cytochrome P450 family. It depends on heme as a cofactor.

Its subcellular location is the membrane. It participates in mycotoxin biosynthesis. Its function is as follows. Cytochrome P450 monooxygenase; part of the gene cluster that mediates the biosynthesis of a family of the mycotoxins cytochalasins E and K. The hybrid PKS-NRPS synthetase ccsA and the enoyl reductase ccsC are responsible for fusion of phenylalanine with an octaketide backbone and subsequent release of the stable tetramic acid precursor. The polyketide synthase module (PKS) of the PKS-NRPS ccsA is responsible for the synthesis of the octaketide backbone. The downstream nonribosomal peptide synthetase (NRPS) amidates the carboxyl end of the octaketide with a phenylalanine. A reductase-like domain (R) at the C-terminus catalyzes the reductive release of the polyketide-amino acid intermediate. Because ccsA lacks a designated enoylreductase (ER) domain, the required activity is provided the enoyl reductase ccsC. Upon formation of the 11-membered carbocycle-fused perhydroisoindolone intermediate, a number of oxidative steps are required to afford the final cytochalasin E and K, including two hydroxylations at C17 and C18, one alcohol oxidation at C17, one epoxidation at C6 and C7 and two Baeyer-Villiger oxidations. The oxidative modification at C17, C18 and the C6-C7 epoxidation are likely to be catalyzed by the two cytochrome P450 oxygenases ccsD and ccsG. CcsD may be responsible for the epoxidation of the C6-C7 double bond. CcsG may be responsible for the successive oxidative modifications at C17 and C18. The double Baeyer-Villiger oxidations of ketocytochalasin to precytochalasin and cytochalasin Z(16) are among the final steps leading to cytochalasin E and K and are catalyzed by ccsB. The first oxygen insertion step follows that of the classic BVMO mechanism, generating the ester precytochalasin. Release of precytochalasin into an aqueous environment can generate the shunt product iso-precytochalasin through spontaneous isomerization. Alternatively, precytochalasin can undergo further oxidation by ccsB to yield the in-line carbonate-containing cytochalasin Z(16). Cytochalasin Z(16) is a precursor to cytochalasin E and cytochalasin K, whereas iso-precytochalasin is a precursor to cytochalasin Z(17) and rosellichalasin. The hydrolyase ccsE may catalyze hydrolysis of epoxide bond in cytochalasin E to afford cytochalasin K. The function of ccsF has not been assigned but it may play a role in post-PKS-NRPS biosynthetic step, resistance or transport of cytochalasins and related PKS-NRPS products. In Aspergillus clavatus (strain ATCC 1007 / CBS 513.65 / DSM 816 / NCTC 3887 / NRRL 1 / QM 1276 / 107), this protein is Cytochrome P450 monooxygenase ccsD.